Here is a 184-residue protein sequence, read N- to C-terminus: ATP-dependent protease subunit HslV (184 aa).

Residue Thr-12 is part of the active site. The Na(+) site is built by Ala-166, Cys-169, and Thr-172.

Belongs to the peptidase T1B family. HslV subfamily. In terms of assembly, a double ring-shaped homohexamer of HslV is capped on each side by a ring-shaped HslU homohexamer. The assembly of the HslU/HslV complex is dependent on binding of ATP.

The protein localises to the cytoplasm. It catalyses the reaction ATP-dependent cleavage of peptide bonds with broad specificity.. Allosterically activated by HslU binding. In terms of biological role, protease subunit of a proteasome-like degradation complex believed to be a general protein degrading machinery. This chain is ATP-dependent protease subunit HslV, found in Nitrobacter hamburgensis (strain DSM 10229 / NCIMB 13809 / X14).